Here is a 323-residue protein sequence, read N- to C-terminus: Cysteine synthase A (323 aa).

Hydrogen sulfide contacts are provided by N8 and R35. Position 42 is an N6-(pyridoxal phosphate)lysine (K42). Pyridoxal 5'-phosphate contacts are provided by residues N72 and 177–181; that span reads GTGGT. A hydrogen sulfide-binding site is contributed by L269. Residue S273 participates in pyridoxal 5'-phosphate binding.

It belongs to the cysteine synthase/cystathionine beta-synthase family. As to quaternary structure, homodimer. Pyridoxal 5'-phosphate is required as a cofactor.

It catalyses the reaction O-acetyl-L-serine + hydrogen sulfide = L-cysteine + acetate. It participates in amino-acid biosynthesis; L-cysteine biosynthesis; L-cysteine from L-serine: step 2/2. The polypeptide is Cysteine synthase A (cysK) (Escherichia coli O157:H7).